A 452-amino-acid chain; its full sequence is 3-phosphoshikimate 1-carboxyvinyltransferase (452 aa).

Residues 1-23 (MLNGSASKPATARKSAGLTGSVR) are disordered. Residues Lys28, Ser29, and Arg33 each coordinate 3-phosphoshikimate. Position 28 (Lys28) interacts with phosphoenolpyruvate. Phosphoenolpyruvate contacts are provided by Gly100 and Arg128. Positions 173, 175, 326, and 353 each coordinate 3-phosphoshikimate. Gln175 lines the phosphoenolpyruvate pocket. Asp326 functions as the Proton acceptor in the catalytic mechanism. Residues Arg357 and Arg405 each contribute to the phosphoenolpyruvate site.

Belongs to the EPSP synthase family. As to quaternary structure, monomer.

The protein resides in the cytoplasm. It catalyses the reaction 3-phosphoshikimate + phosphoenolpyruvate = 5-O-(1-carboxyvinyl)-3-phosphoshikimate + phosphate. It participates in metabolic intermediate biosynthesis; chorismate biosynthesis; chorismate from D-erythrose 4-phosphate and phosphoenolpyruvate: step 6/7. Its function is as follows. Catalyzes the transfer of the enolpyruvyl moiety of phosphoenolpyruvate (PEP) to the 5-hydroxyl of shikimate-3-phosphate (S3P) to produce enolpyruvyl shikimate-3-phosphate and inorganic phosphate. This chain is 3-phosphoshikimate 1-carboxyvinyltransferase, found in Rhizobium johnstonii (strain DSM 114642 / LMG 32736 / 3841) (Rhizobium leguminosarum bv. viciae).